We begin with the raw amino-acid sequence, 195 residues long: Protein GrpE (195 aa).

Positions 1–18 (MDPKEKKTKQEEELKVDD) are enriched in basic and acidic residues. Residues 1–41 (MDPKEKKTKQEEELKVDDIQDTVEGQSQNEEATEATEPLTA) are disordered.

Belongs to the GrpE family. As to quaternary structure, homodimer.

The protein localises to the cytoplasm. Its function is as follows. Participates actively in the response to hyperosmotic and heat shock by preventing the aggregation of stress-denatured proteins, in association with DnaK and GrpE. It is the nucleotide exchange factor for DnaK and may function as a thermosensor. Unfolded proteins bind initially to DnaJ; upon interaction with the DnaJ-bound protein, DnaK hydrolyzes its bound ATP, resulting in the formation of a stable complex. GrpE releases ADP from DnaK; ATP binding to DnaK triggers the release of the substrate protein, thus completing the reaction cycle. Several rounds of ATP-dependent interactions between DnaJ, DnaK and GrpE are required for fully efficient folding. In Bacteroides fragilis (strain ATCC 25285 / DSM 2151 / CCUG 4856 / JCM 11019 / LMG 10263 / NCTC 9343 / Onslow / VPI 2553 / EN-2), this protein is Protein GrpE.